The sequence spans 387 residues: Diphthine methyltransferase (387 aa).

WD repeat units follow at residues 62–102 (NTYG…KDDF), 119–159 (EKDV…VQFT), 195–237 (PHEL…FIWS), 241–286 (IHDA…ESIF), and 357–387 (GHDS…TWIV).

This sequence belongs to the DPH7 family. In terms of assembly, interacts with CAN1 and RTT10.

The protein resides in the cytoplasm. Its subcellular location is the endosome. The catalysed reaction is diphthine methyl ester-[translation elongation factor 2] + H2O = diphthine-[translation elongation factor 2] + methanol + H(+). It participates in protein modification; peptidyl-diphthamide biosynthesis. Functionally, catalyzes the demethylation of diphthine methyl ester to form diphthine, an intermediate in diphthamide biosynthesis, a post-translational modification of histidine which occurs in translation elongation factor 2 (EFT1 and EFT2). Also plays a role in the regulation of the retromer complex and is required for the recycling from endosomes of plasma membrane proteins like CAN1 and MUP1. Identified in a screen for mutants with decreased levels of rDNA transcription. This chain is Diphthine methyltransferase (RRT2), found in Saccharomyces cerevisiae (strain ATCC 204508 / S288c) (Baker's yeast).